A 152-amino-acid chain; its full sequence is Protein SprT-like (152 aa).

Positions 7–148 (QRLVEEVSLQ…GKCKGKLILI (142 aa)) constitute a SprT-like domain. Zn(2+) is bound at residue His67. Glu68 is a catalytic residue. His71 provides a ligand contact to Zn(2+).

It belongs to the SprT family. Zn(2+) serves as cofactor.

The protein resides in the cytoplasm. This is Protein SprT-like from Bacillus cereus (strain AH187).